The sequence spans 332 residues: 2,3-diketo-L-gulonate reductase (332 aa).

H44 (proton donor) is an active-site residue. Residues I168–S174, W224–K225, and G304–E306 contribute to the NAD(+) site.

This sequence belongs to the LDH2/MDH2 oxidoreductase family. DlgD subfamily. Homodimer.

The protein localises to the cytoplasm. It carries out the reaction 3-dehydro-L-gulonate + NAD(+) = 2,3-dioxo-L-gulonate + NADH + H(+). The enzyme catalyses 3-dehydro-L-gulonate + NADP(+) = 2,3-dioxo-L-gulonate + NADPH + H(+). Its function is as follows. Catalyzes the reduction of 2,3-diketo-L-gulonate in the presence of NADH, to form 3-keto-L-gulonate. This is 2,3-diketo-L-gulonate reductase from Escherichia coli O6:K15:H31 (strain 536 / UPEC).